The following is a 90-amino-acid chain: Large ribosomal subunit protein eL33 (90 aa).

Belongs to the eukaryotic ribosomal protein eL33 family.

The polypeptide is Large ribosomal subunit protein eL33 (Methanopyrus kandleri (strain AV19 / DSM 6324 / JCM 9639 / NBRC 100938)).